The sequence spans 243 residues: 1-(5-phosphoribosyl)-5-[(5-phosphoribosylamino)methylideneamino] imidazole-4-carboxamide isomerase (243 aa).

Asp10 acts as the Proton acceptor in catalysis. The active-site Proton donor is the Asp128.

This sequence belongs to the HisA/HisF family.

The protein resides in the cytoplasm. It catalyses the reaction 1-(5-phospho-beta-D-ribosyl)-5-[(5-phospho-beta-D-ribosylamino)methylideneamino]imidazole-4-carboxamide = 5-[(5-phospho-1-deoxy-D-ribulos-1-ylimino)methylamino]-1-(5-phospho-beta-D-ribosyl)imidazole-4-carboxamide. Its pathway is amino-acid biosynthesis; L-histidine biosynthesis; L-histidine from 5-phospho-alpha-D-ribose 1-diphosphate: step 4/9. The sequence is that of 1-(5-phosphoribosyl)-5-[(5-phosphoribosylamino)methylideneamino] imidazole-4-carboxamide isomerase from Helicobacter hepaticus (strain ATCC 51449 / 3B1).